The primary structure comprises 733 residues: Methylmalonyl-CoA mutase large subunit (733 aa).

Acidic residues predominate over residues 1 to 10; the sequence is MRIPEFDDIE. The disordered stretch occupies residues 1–22; that stretch reads MRIPEFDDIELGAGGGPSGSAE. 6 residues coordinate (R)-methylmalonyl-CoA: tyrosine 78, methionine 81, threonine 88, arginine 90, tyrosine 92, and serine 117. 2 residues coordinate cob(II)alamin: phenylalanine 120 and alanine 142. (R)-methylmalonyl-CoA contacts are provided by threonine 198 and glutamine 200. Valine 209 and arginine 210 together coordinate cob(II)alamin. Arginine 210, histidine 247, arginine 286, and serine 288 together coordinate (R)-methylmalonyl-CoA. Glycine 336, glutamate 373, alanine 376, glycine 612, histidine 613, aspartate 614, arginine 615, serine 658, leucine 660, glycine 689, and threonine 712 together coordinate cob(II)alamin. The region spanning 600 to 732 is the B12-binding domain; the sequence is RPRILVAKMG…KRLAADLGHE (133 aa).

The protein belongs to the methylmalonyl-CoA mutase family. In terms of assembly, heterodimer of an alpha and a beta chain. Requires adenosylcob(III)alamin as cofactor.

It carries out the reaction (R)-methylmalonyl-CoA = succinyl-CoA. In terms of biological role, catalyzes the isomerization of succinyl-CoA to methylmalonyl-CoA during synthesis of propionate from tricarboxylic acid-cycle intermediates. This conversion most likely represents an important source of building blocks for polyketide antibiotic biosynthesis. It is unable to catalyze the conversion of isobutyryl-CoA into N-butyryl-CoA. The sequence is that of Methylmalonyl-CoA mutase large subunit (mutB) from Streptomyces virginiae (Streptomyces cinnamonensis).